A 497-amino-acid chain; its full sequence is L-asparagine permease (497 aa).

12 helical membrane-spanning segments follow: residues 34–54 (QVQMIAIGGAIGTGLFLGAGA), 58–78 (MAGPALALVYLICGIFSFFIL), 109–129 (VAGWMYFINWAMTGIVDITAV), 146–166 (VFALGALTIVGTMNMIGVKWF), 171–191 (FWFALIKVLAIVIFLVVGTIF), 219–239 (LLPALVLIQGVVFAFASIELV), 264–284 (IGLFYVGSVVLLVLLLPWNAY), 298–318 (LGVPYIGSIMNIVVLTAALSS), 353–373 (YAGILATLVVYVVGVFLNYLV), 378–398 (FEIVLNFASLGIIASWAFIMV), 422–442 (APFTSWLTLLFLLSVLVLMAF), and 448–468 (TYTIASLPLIAILLVAGWFGV).

It belongs to the amino acid-polyamine-organocation (APC) superfamily. Amino acid transporter (AAT) (TC 2.A.3.1) family.

It localises to the cell inner membrane. This is L-asparagine permease (ansP) from Salmonella typhimurium (strain LT2 / SGSC1412 / ATCC 700720).